The primary structure comprises 445 residues: Glutamyl-tRNA(Gln) amidotransferase subunit D (445 aa).

In terms of domain architecture, Asparaginase/glutaminase spans 93 to 425; sequence SEIKIISTGG…EKIRSLMISN (333 aa). Active-site residues include Thr103, Thr179, Asp180, and Lys258.

Belongs to the asparaginase 1 family. GatD subfamily. In terms of assembly, heterodimer of GatD and GatE.

It catalyses the reaction L-glutamyl-tRNA(Gln) + L-glutamine + ATP + H2O = L-glutaminyl-tRNA(Gln) + L-glutamate + ADP + phosphate + H(+). Its function is as follows. Allows the formation of correctly charged Gln-tRNA(Gln) through the transamidation of misacylated Glu-tRNA(Gln) in organisms which lack glutaminyl-tRNA synthetase. The reaction takes place in the presence of glutamine and ATP through an activated gamma-phospho-Glu-tRNA(Gln). The GatDE system is specific for glutamate and does not act on aspartate. This Saccharolobus islandicus (strain L.S.2.15 / Lassen #1) (Sulfolobus islandicus) protein is Glutamyl-tRNA(Gln) amidotransferase subunit D.